The following is a 181-amino-acid chain: Ras-like protein 1 (181 aa).

Residue 10–17 (GAGGVGKS) participates in GTP binding. The Effector region signature appears at 32–40 (YDPTIEDSY). GTP contacts are provided by residues 57–61 (DTAGQ) and 116–119 (NKCD). Cysteine 178 carries the cysteine methyl ester modification. Cysteine 178 carries the S-geranylgeranyl cysteine lipid modification. A propeptide spans 179–181 (KML) (removed in mature form).

It belongs to the small GTPase superfamily. Ras family.

The protein resides in the cell membrane. The enzyme catalyses GTP + H2O = GDP + phosphate + H(+). Its activity is regulated as follows. Alternates between an inactive form bound to GDP and an active form bound to GTP. Activated by a guanine nucleotide-exchange factor (GEF) and inactivated by a GTPase-activating protein (GAP). In terms of biological role, ras proteins bind GDP/GTP and possess intrinsic GTPase activity. Plays a role in eye development by regulating cell growth, survival of postmitotic ommatidial cells and differentiation of photoreceptor cells. During larval development, mediates Ptth/tor signaling leading to the production of ecdysone, a hormone required for the initiation of metamorphosis. In Drosophila mojavensis (Fruit fly), this protein is Ras-like protein 1.